A 426-amino-acid chain; its full sequence is Serine--tRNA ligase (426 aa).

L-serine is bound at residue 229–231 (TAE). 260–262 (RSE) is an ATP binding site. Position 283 (E283) interacts with L-serine. 347–350 (EIAS) is a binding site for ATP. S383 contacts L-serine.

The protein belongs to the class-II aminoacyl-tRNA synthetase family. Type-1 seryl-tRNA synthetase subfamily. Homodimer. The tRNA molecule binds across the dimer.

Its subcellular location is the cytoplasm. The catalysed reaction is tRNA(Ser) + L-serine + ATP = L-seryl-tRNA(Ser) + AMP + diphosphate + H(+). It carries out the reaction tRNA(Sec) + L-serine + ATP = L-seryl-tRNA(Sec) + AMP + diphosphate + H(+). It participates in aminoacyl-tRNA biosynthesis; selenocysteinyl-tRNA(Sec) biosynthesis; L-seryl-tRNA(Sec) from L-serine and tRNA(Sec): step 1/1. Catalyzes the attachment of serine to tRNA(Ser). Is also able to aminoacylate tRNA(Sec) with serine, to form the misacylated tRNA L-seryl-tRNA(Sec), which will be further converted into selenocysteinyl-tRNA(Sec). In Rickettsia bellii (strain RML369-C), this protein is Serine--tRNA ligase.